A 61-amino-acid chain; its full sequence is Sperm protamine P1 (61 aa).

The segment at 1–61 is disordered; it reads MARYRRRSRS…RRYSRRGRRR (61 aa).

This sequence belongs to the protamine P1 family. In terms of tissue distribution, testis.

It localises to the nucleus. The protein resides in the chromosome. Protamines substitute for histones in the chromatin of sperm during the haploid phase of spermatogenesis. They compact sperm DNA into a highly condensed, stable and inactive complex. In Dasyurus hallucatus (Northern quoll), this protein is Sperm protamine P1 (PRM1).